A 338-amino-acid chain; its full sequence is Holliday junction branch migration complex subunit RuvB (338 aa).

Residues 1 to 181 are large ATPase domain (RuvB-L); that stretch reads MERAITPEKR…FGVISRLEFY (181 aa). ATP is bound by residues leucine 20, arginine 21, glycine 62, lysine 65, threonine 66, threonine 67, 128 to 130, arginine 171, tyrosine 181, and arginine 218; that span reads EDF. Threonine 66 contacts Mg(2+). The segment at 182–252 is small ATPAse domain (RuvB-S); the sequence is THDELAFIVT…VVQETLRLLE (71 aa). The segment at 255 to 338 is head domain (RuvB-H); the sequence is EMGFDQMDRM…TPERPQGSLF (84 aa). 2 residues coordinate DNA: arginine 310 and arginine 315.

It belongs to the RuvB family. As to quaternary structure, homohexamer. Forms an RuvA(8)-RuvB(12)-Holliday junction (HJ) complex. HJ DNA is sandwiched between 2 RuvA tetramers; dsDNA enters through RuvA and exits via RuvB. An RuvB hexamer assembles on each DNA strand where it exits the tetramer. Each RuvB hexamer is contacted by two RuvA subunits (via domain III) on 2 adjacent RuvB subunits; this complex drives branch migration. In the full resolvosome a probable DNA-RuvA(4)-RuvB(12)-RuvC(2) complex forms which resolves the HJ.

The protein resides in the cytoplasm. The catalysed reaction is ATP + H2O = ADP + phosphate + H(+). The RuvA-RuvB-RuvC complex processes Holliday junction (HJ) DNA during genetic recombination and DNA repair, while the RuvA-RuvB complex plays an important role in the rescue of blocked DNA replication forks via replication fork reversal (RFR). RuvA specifically binds to HJ cruciform DNA, conferring on it an open structure. The RuvB hexamer acts as an ATP-dependent pump, pulling dsDNA into and through the RuvAB complex. RuvB forms 2 homohexamers on either side of HJ DNA bound by 1 or 2 RuvA tetramers; 4 subunits per hexamer contact DNA at a time. Coordinated motions by a converter formed by DNA-disengaged RuvB subunits stimulates ATP hydrolysis and nucleotide exchange. Immobilization of the converter enables RuvB to convert the ATP-contained energy into a lever motion, pulling 2 nucleotides of DNA out of the RuvA tetramer per ATP hydrolyzed, thus driving DNA branch migration. The RuvB motors rotate together with the DNA substrate, which together with the progressing nucleotide cycle form the mechanistic basis for DNA recombination by continuous HJ branch migration. Branch migration allows RuvC to scan DNA until it finds its consensus sequence, where it cleaves and resolves cruciform DNA. In Trichlorobacter lovleyi (strain ATCC BAA-1151 / DSM 17278 / SZ) (Geobacter lovleyi), this protein is Holliday junction branch migration complex subunit RuvB.